Consider the following 579-residue polypeptide: UvrABC system protein C (579 aa).

The region spanning 12 to 89 (DATGVYIFRD…IKRYRPPYNV (78 aa)) is the GIY-YIG domain. The region spanning 193–228 (QEVIEVLEEEMKEASERLEFERAARIRDQIESIREV) is the UVR domain.

Belongs to the UvrC family. Interacts with UvrB in an incision complex.

It is found in the cytoplasm. Its function is as follows. The UvrABC repair system catalyzes the recognition and processing of DNA lesions. UvrC both incises the 5' and 3' sides of the lesion. The N-terminal half is responsible for the 3' incision and the C-terminal half is responsible for the 5' incision. The protein is UvrABC system protein C of Methanothermobacter thermautotrophicus (strain ATCC 29096 / DSM 1053 / JCM 10044 / NBRC 100330 / Delta H) (Methanobacterium thermoautotrophicum).